A 202-amino-acid polypeptide reads, in one-letter code: Peptidyl-tRNA hydrolase (202 aa).

Tyr19 provides a ligand contact to tRNA. Catalysis depends on His24, which acts as the Proton acceptor. The tRNA site is built by Tyr70, Asn72, and Asn118.

The protein belongs to the PTH family. Monomer.

The protein localises to the cytoplasm. It carries out the reaction an N-acyl-L-alpha-aminoacyl-tRNA + H2O = an N-acyl-L-amino acid + a tRNA + H(+). In terms of biological role, hydrolyzes ribosome-free peptidyl-tRNAs (with 1 or more amino acids incorporated), which drop off the ribosome during protein synthesis, or as a result of ribosome stalling. Catalyzes the release of premature peptidyl moieties from peptidyl-tRNA molecules trapped in stalled 50S ribosomal subunits, and thus maintains levels of free tRNAs and 50S ribosomes. The protein is Peptidyl-tRNA hydrolase of Prochlorococcus marinus (strain NATL1A).